Here is a 269-residue protein sequence, read N- to C-terminus: Probable cysteine protease avirulence protein AvrPpiC2 (269 aa).

Residues 1–39 are disordered; sequence MTIVSGHIGKHPSLTTVQAGSSASVENQMPDPAQFSDGR. Residues 13–27 show a composition bias toward polar residues; the sequence is SLTTVQAGSSASVEN. Residues Cys72, His213, and Asp230 contribute to the active site.

Belongs to the peptidase C58 family.

Functionally, potential cysteine protease. Avirulence protein, which may be essential during infection of plant cells from Pea and some Arabidopsis thaliana cultivars. May act by affecting the plant defense system. In plants lacking appropriate resistance (R) gene, it probably impairs the plant defense system and leads to the bacteria multiplication. In contrast, in plants containing the appropriate R protein, it is unable to induce disease symptoms, explaining its avirulence name. This chain is Probable cysteine protease avirulence protein AvrPpiC2 (avrPpiC2), found in Pseudomonas syringae pv. pisi.